Here is a 487-residue protein sequence, read N- to C-terminus: Probable UDP-N-acetylglucosamine pyrophosphorylase (487 aa).

The short motif at Leu-105–Gly-108 is the Substrate binding element. Residues Leu-105 to Gly-108, Lys-119, Gln-198, and Gly-225 each bind UTP. A substrate-binding site is contributed by Asn-226. A UTP-binding site is contributed by Asp-256. The Substrate binding signature appears at Glu-307–Tyr-308. Lys-382 serves as a coordination point for UTP. Residue Lys-412 coordinates substrate.

Belongs to the UDPGP type 1 family.

It localises to the cytoplasm. The enzyme catalyses N-acetyl-alpha-D-glucosamine 1-phosphate + UTP + H(+) = UDP-N-acetyl-alpha-D-glucosamine + diphosphate. Its pathway is nucleotide-sugar biosynthesis; UDP-N-acetyl-alpha-D-glucosamine biosynthesis; UDP-N-acetyl-alpha-D-glucosamine from N-acetyl-alpha-D-glucosamine 1-phosphate: step 1/1. The sequence is that of Probable UDP-N-acetylglucosamine pyrophosphorylase (uap1) from Dictyostelium discoideum (Social amoeba).